The sequence spans 417 residues: UPF0761 membrane protein Veis_3782 (417 aa).

Helical transmembrane passes span 54–74 (ILAL…FPIF), 111–131 (GLGL…ILTI), 151–171 (VLIY…SLAL), 192–212 (FLFD…LYHY), 226–246 (GGLF…LYLG), and 261–281 (LPIL…GAVV).

The protein belongs to the UPF0761 family.

The protein localises to the cell inner membrane. In Verminephrobacter eiseniae (strain EF01-2), this protein is UPF0761 membrane protein Veis_3782.